A 317-amino-acid chain; its full sequence is Probable GTP 3',8-cyclase (317 aa).

One can recognise a Radical SAM core domain in the interval 4-223 (RYGRPLEDLR…KSEIREKHFR (220 aa)). Arg-13 is a binding site for GTP. [4Fe-4S] cluster contacts are provided by Cys-20, Cys-24, and Cys-27. Lys-61 lines the GTP pocket. An S-adenosyl-L-methionine-binding site is contributed by Gly-65. Thr-91 serves as a coordination point for GTP. Ser-115 lines the S-adenosyl-L-methionine pocket. Residue Lys-152 participates in GTP binding. 2 residues coordinate [4Fe-4S] cluster: Cys-246 and Cys-249. Position 251–253 (251–253 (RVR)) interacts with GTP. A [4Fe-4S] cluster-binding site is contributed by Cys-263.

This sequence belongs to the radical SAM superfamily. MoaA family. [4Fe-4S] cluster is required as a cofactor.

The enzyme catalyses GTP + AH2 + S-adenosyl-L-methionine = (8S)-3',8-cyclo-7,8-dihydroguanosine 5'-triphosphate + 5'-deoxyadenosine + L-methionine + A + H(+). It functions in the pathway cofactor biosynthesis; molybdopterin biosynthesis. Its function is as follows. Catalyzes the cyclization of GTP to (8S)-3',8-cyclo-7,8-dihydroguanosine 5'-triphosphate. In Metallosphaera sedula (strain ATCC 51363 / DSM 5348 / JCM 9185 / NBRC 15509 / TH2), this protein is Probable GTP 3',8-cyclase.